We begin with the raw amino-acid sequence, 387 residues long: Double C2-like domain-containing protein gamma (387 aa).

C2 domains lie at 83 to 209 (ALGT…DICL) and 243 to 376 (ERGR…ELWH). The Ca(2+) site is built by aspartate 274, aspartate 280, aspartate 334, aspartate 336, and aspartate 342.

Ca(2+) serves as cofactor.

In terms of biological role, may be involved in regulation of vesicular trafficking. In vitro, does not bind calcium and phospholipids. In Mus musculus (Mouse), this protein is Double C2-like domain-containing protein gamma (Doc2g).